Reading from the N-terminus, the 299-residue chain is Coenzyme PQQ synthesis protein B (299 aa).

The protein belongs to the PqqB family.

It functions in the pathway cofactor biosynthesis; pyrroloquinoline quinone biosynthesis. Functionally, may be involved in the transport of PQQ or its precursor to the periplasm. The polypeptide is Coenzyme PQQ synthesis protein B (Methylorubrum extorquens (strain ATCC 14718 / DSM 1338 / JCM 2805 / NCIMB 9133 / AM1) (Methylobacterium extorquens)).